Here is a 34-residue protein sequence, read N- to C-terminus: uncharacterized protein (34 aa).

A compositionally biased stretch (basic and acidic residues) spans 1-12; sequence MFSHFEVSENRP. A disordered region spans residues 1 to 21; the sequence is MFSHFEVSENRPRKQPRRKRI.

This is an uncharacterized protein from Saccharomyces cerevisiae (strain ATCC 204508 / S288c) (Baker's yeast).